Reading from the N-terminus, the 417-residue chain is Gamma-glutamyl phosphate reductase (417 aa).

Belongs to the gamma-glutamyl phosphate reductase family.

Its subcellular location is the cytoplasm. The catalysed reaction is L-glutamate 5-semialdehyde + phosphate + NADP(+) = L-glutamyl 5-phosphate + NADPH + H(+). The protein operates within amino-acid biosynthesis; L-proline biosynthesis; L-glutamate 5-semialdehyde from L-glutamate: step 2/2. Functionally, catalyzes the NADPH-dependent reduction of L-glutamate 5-phosphate into L-glutamate 5-semialdehyde and phosphate. The product spontaneously undergoes cyclization to form 1-pyrroline-5-carboxylate. The chain is Gamma-glutamyl phosphate reductase from Escherichia coli O8 (strain IAI1).